A 223-amino-acid chain; its full sequence is Nicotinamide/nicotinic acid mononucleotide adenylyltransferase 2 (223 aa).

Residues Ser11 and Phe12 each coordinate NAD(+). Residue His19 participates in ATP binding. Residues Trp87, Thr90, Gly116, Asp118, Leu133, Trp134, and Arg153 each coordinate NAD(+). 190–191 (TR) serves as a coordination point for ATP.

The protein belongs to the eukaryotic NMN adenylyltransferase family. A divalent metal cation is required as a cofactor.

The catalysed reaction is beta-nicotinamide D-ribonucleotide + ATP + H(+) = diphosphate + NAD(+). It carries out the reaction nicotinate beta-D-ribonucleotide + ATP + H(+) = deamido-NAD(+) + diphosphate. It participates in cofactor biosynthesis; NAD(+) biosynthesis; deamido-NAD(+) from nicotinate D-ribonucleotide: step 1/1. It functions in the pathway cofactor biosynthesis; NAD(+) biosynthesis; NAD(+) from nicotinamide D-ribonucleotide: step 1/1. Its function is as follows. Catalyzes the formation of NAD(+) from nicotinamide mononucleotide (NMN) and ATP. Can also use the deamidated form; nicotinic acid mononucleotide (NaMN) as substrate. This is Nicotinamide/nicotinic acid mononucleotide adenylyltransferase 2 from Caenorhabditis elegans.